The sequence spans 377 residues: Chaperone MoxR1 (377 aa).

The tract at residues 1-33 (MTSAGGFPAGAGGYQTPGGHSASPAHEAPPGGA) is disordered. Over residues 7 to 16 (FPAGAGGYQT) the composition is skewed to gly residues. Low complexity predominate over residues 19-33 (GHSASPAHEAPPGGA). 78–85 (GVPGVAKT) serves as a coordination point for ATP.

It belongs to the MoxR family. Interacts with RipA. Interacts with host Toll-like receptor 4 (TLR4).

Displays ATP-enhanced chaperone activity. Required for the proper folding of the peptidoglycan endopeptidase RipA and its secretion through the TAT secretion system. In vitro, prevents thermal aggregation of MalZ protein and protects the functional activity of the restriction enzyme NdeI from thermal inactivation. Its function is as follows. Could be a moonlighting protein that uses a multipronged approach to dampen host-directed immunity for efficient replication, survival and pathogenesis. Can enhance virulence by inhibiting autophagy and apoptosis, and disrupting cellular bioenergetics. Binds and activates host TLR4 on the surface of macrophage cells, leading to the activation of the host NFKB and MAPK signaling cascades and enhanced secretion of proinflammatory cytokines. Inhibits autophagic flux via activation of PI3K-AKT-MTOR-ULK1 signaling cascade and represses apoptosis via inhibiting protooncogene c-FOS and MAPK JNK1/2. Also induces robust disruption of cellular bioenergetics by metabolic reprogramming to rewire the citric acid cycle intermediates for its benefit. The protein is Chaperone MoxR1 of Mycobacterium tuberculosis (strain ATCC 25618 / H37Rv).